The sequence spans 320 residues: Olfactory receptor 51E2 (320 aa).

At 1–24 (MSSCNFTHATFMLIGIPGLEEAHF) the chain is on the extracellular side. Asn5 carries N-linked (GlcNAc...) asparagine glycosylation. The chain crosses the membrane as a helical span at residues 25-45 (WFGFPLLSMYAVALFGNCIVV). Topologically, residues 46-53 (FIVRTERS) are cytoplasmic. A helical transmembrane segment spans residues 54 to 74 (LHAPMYLFLCMLAAIDLALST). Residues 75–98 (STMPKILALFWFDSREITFDACLA) lie on the Extracellular side of the membrane. A disulfide bond links Cys96 and Cys178. The helical transmembrane segment at 99-119 (QMFFIHALSAIESTILLAMAF) threads the bilayer. Residues 120–138 (DRYVAICHPLRHAAVLNNT) lie on the Cytoplasmic side of the membrane. The chain crosses the membrane as a helical span at residues 139–159 (VTVQIGMVALVRGSLFFFPLP). The Extracellular segment spans residues 160 to 195 (LLIKRLAFCHSNVLSHSYCVHQDVMKLAYTDTLPNV). The helical transmembrane segment at 196-216 (VYGLTAILLVMGVDVMFISLS) threads the bilayer. Topologically, residues 217 to 236 (YFLIIRAVLQLPSKSERAKA) are cytoplasmic. Residues 237 to 257 (FGTCVSHIGVVLAFYVPLIGL) form a helical membrane-spanning segment. The Extracellular segment spans residues 258-272 (SVVHRFGNSLDPIVH). Residues 273–293 (VLMGDVYLLLPPVINPIIYGA) traverse the membrane as a helical segment. Residues 294-320 (KTKQIRTRVLAMFKISCDKDIEAGGNT) are Cytoplasmic-facing.

Belongs to the G-protein coupled receptor 1 family. In terms of tissue distribution, expressed in brain and liver. Expressed only in some areas of the brain and in the olfactory epithelium.

Its subcellular location is the cell membrane. It is found in the early endosome membrane. Olfactory receptor. The activity of this receptor is probably mediated by G-proteins which induce elevation of intracellular Ca(2+), cAMP and activation of phosphorylation of the protein kinases PKA and MAPK3/MAPK1. Activation of OR51E2 may affect melanocyte proliferation, differentiation, and melanogenesis and may increase proliferation and migration of primary retinal pigment epithelial (RPE) cells. Activated by the short chain fatty acids (SCFA), acetate and propionate. In response to SCFA, may positively regulate renin secretion and increase blood pressure. May also be activated by steroid hormones and regulate cell proliferation. Activated by L-lactate in glomus cells. The polypeptide is Olfactory receptor 51E2 (Or51e2) (Rattus norvegicus (Rat)).